Here is a 362-residue protein sequence, read N- to C-terminus: Histidinol-phosphate aminotransferase 1 (362 aa).

Lys226 is modified (N6-(pyridoxal phosphate)lysine).

Belongs to the class-II pyridoxal-phosphate-dependent aminotransferase family. Histidinol-phosphate aminotransferase subfamily. As to quaternary structure, homodimer. The cofactor is pyridoxal 5'-phosphate.

The enzyme catalyses L-histidinol phosphate + 2-oxoglutarate = 3-(imidazol-4-yl)-2-oxopropyl phosphate + L-glutamate. The protein operates within amino-acid biosynthesis; L-histidine biosynthesis; L-histidine from 5-phospho-alpha-D-ribose 1-diphosphate: step 7/9. This Dechloromonas aromatica (strain RCB) protein is Histidinol-phosphate aminotransferase 1.